The following is a 572-amino-acid chain: Glypican-5 (572 aa).

Residues 1 to 24 (MDAQTWPVGFRCLLLLALVGSARS) form the signal peptide. 2 N-linked (GlcNAc...) asparagine glycosylation sites follow: Asn120 and Asn237. The disordered stretch occupies residues 355–375 (SPRCSFDQSKEKHGMKTTTRN). 5 O-linked (Xyl...) (glycosaminoglycan) serine glycosylation sites follow: Ser441, Ser486, Ser495, Ser507, and Ser509. The N-linked (GlcNAc...) asparagine glycan is linked to Asn527.

The protein belongs to the glypican family. In terms of tissue distribution, in adult, primarily expressed in the brain. Also detected in fetal brain, lung and liver.

It is found in the cell membrane. The protein localises to the secreted. It localises to the extracellular space. Its function is as follows. Cell surface proteoglycan that bears heparan sulfate. This chain is Glypican-5 (GPC5), found in Homo sapiens (Human).